The sequence spans 140 residues: Large ribosomal subunit protein bL17 (140 aa).

A compositionally biased stretch (basic and acidic residues) spans 119–133; sequence DPSAKGAADRARLEE. Residues 119 to 140 form a disordered region; that stretch reads DPSAKGAADRARLEEEGGMTEE.

The protein belongs to the bacterial ribosomal protein bL17 family. In terms of assembly, part of the 50S ribosomal subunit. Contacts protein L32.

In Maricaulis maris (strain MCS10) (Caulobacter maris), this protein is Large ribosomal subunit protein bL17.